We begin with the raw amino-acid sequence, 425 residues long: Type II secretion system protein L (425 aa).

At 1–273 the chain is on the cytoplasmic side; sequence MKIAGKWKRK…DKAWQNTLLP (273 aa). The chain crosses the membrane as a helical span at residues 274-290; sequence WRGVGIAFACYLLLVVA. Residues 291-425 lie on the Periplasmic side of the membrane; it reads DAGWAHYQLY…EGRLTLRSQQ (135 aa).

It belongs to the GSP L family. In terms of assembly, type II secretion system is composed of four main components: the outer membrane complex, the inner membrane complex, the cytoplasmic secretion ATPase and the periplasm-spanning pseudopilus. Forms homodimers. Interacts with OutM/GspM. Interacts with OutE/GspE and OutF/GspF.

The protein localises to the cell inner membrane. In terms of biological role, inner membrane component of the type II secretion system required for the energy-dependent secretion of extracellular factors such as proteases and toxins from the periplasm. Plays a role in the complex assembly and recruits OutM resulting in a stable complex in the inner membrane. Provides thus a link between the energy-providing OutE protein in the cytoplasm and the rest of the T2SS machinery. In Pectobacterium carotovorum subsp. carotovorum (Erwinia carotovora subsp. carotovora), this protein is Type II secretion system protein L (outL).